The chain runs to 120 residues: NAD(P)H-quinone oxidoreductase subunit 3, chloroplastic (120 aa).

3 helical membrane-spanning segments follow: residues 9–29, 64–84, and 89–109; these read YFWLFLLLASLIPPVASPISS, MFASVFVISDAETVSLYPWAM, and LGVPASAEASISVTIPIVGSV.

Belongs to the complex I subunit 3 family. NDH is composed of at least 16 different subunits, 5 of which are encoded in the nucleus.

The protein localises to the plastid. Its subcellular location is the chloroplast thylakoid membrane. The catalysed reaction is a plastoquinone + NADH + (n+1) H(+)(in) = a plastoquinol + NAD(+) + n H(+)(out). It carries out the reaction a plastoquinone + NADPH + (n+1) H(+)(in) = a plastoquinol + NADP(+) + n H(+)(out). Its function is as follows. NDH shuttles electrons from NAD(P)H:plastoquinone, via FMN and iron-sulfur (Fe-S) centers, to quinones in the photosynthetic chain and possibly in a chloroplast respiratory chain. The immediate electron acceptor for the enzyme in this species is believed to be plastoquinone. Couples the redox reaction to proton translocation, and thus conserves the redox energy in a proton gradient. The protein is NAD(P)H-quinone oxidoreductase subunit 3, chloroplastic of Huperzia lucidula (Shining clubmoss).